Consider the following 218-residue polypeptide: Interleukin-37 (218 aa).

The interval 1–40 is disordered; the sequence is MSFVGENSGVKMGSEDWEKDEPQCCLEDPAGSPLEPGPSL. A propeptide spans 1–45 (removed in mature form); sequence MSFVGENSGVKMGSEDWEKDEPQCCLEDPAGSPLEPGPSLPTMNF. Basic and acidic residues predominate over residues 13–22; the sequence is GSEDWEKDEP.

Belongs to the IL-1 family. In terms of assembly, interacts with SMAD3. Binds IL18R1, but not to IL1R1, with lower affinity than IL18, and does not seem to act as a receptor antagonist for IL18. Interacts with cargo receptor TMED10; the interaction mediates the translocation from the cytoplasm into the ERGIC (endoplasmic reticulum-Golgi intermediate compartment) and thereby secretion. Post-translationally, proteolytically converted to the mature form by CASP1. In terms of tissue distribution, in general, low constitutive expression, if any, in healthy tissues; high expression in inflammatory counterparts, including in synovial tissues from individuals with active rheumatoid arthritis. Isoform A, isoform B and isoform C are expressed in testis, colon, placenta, lung and lymph node. Isoform D and isoform E were found only in testis and bone marrow. Whereas only isoform A is found in brain, only isoform B in kidney and only isoform C in heart.

The protein localises to the cytoplasm. It localises to the cytosol. It is found in the nucleus. Its subcellular location is the secreted. Functionally, immune regulatory cytokine that acts as a suppressor of innate inflammatory and immune responses involved in curbing excessive inflammation. Signaling can occur via two mechanisms, intracellularly through nuclear translocation with SMAD3 and extracellularly after secretion and binding to its receptor composed of IL18R1 and IL18RAP. Suppresses, or reduces, pro-inflammatory cytokine production, including IL1A and IL6, as well as CCL12, CSF1, CSF2, CXCL13, IL1B, IL23A and IL1RN, but spares anti-inflammatory cytokines. Inhibits dendritic cell activation. The polypeptide is Interleukin-37 (Homo sapiens (Human)).